The sequence spans 337 residues: Mitochondrial uncoupling protein 6 (337 aa).

Solcar repeat units lie at residues 4-136, 145-236, and 246-331; these read KPFL…LKRR, FPLV…VKEI, and GGIG…VRGL. The next 6 helical transmembrane spans lie at 6–26, 105–125, 151–171, 210–230, 252–272, and 304–324; these read FLEGGIAAIIAGALTHPLDLI, PAALFSGVSATILRQMLYSAT, ITAGLIAGAVGSVVGNPADVA, RGSWLTVNRAMIVTASQLATY, VAASFAAGIVAAVASNPIDVV, and YKGLVPTATRQGPFTMILFLT.

It belongs to the mitochondrial carrier (TC 2.A.29) family.

The protein localises to the mitochondrion inner membrane. In terms of biological role, PUMPS are mitochondrial transporter proteins that create proton leaks across the inner mitochondrial membrane, thus uncoupling oxidative phosphorylation. This leads to a decrease in the efficiency of oxidative phosphorylation and an increase in heat production. May be involved in protecting plant cells against oxidative stress damage. Recombinant PUMP6, reconstituted into liposomes, transports a wide range of dicarboxylic acids including malate, oxaloacetate and succinate as well as phosphate, sulfate and thiosulfate. However, it is unknown if these transports are of any biological significance in vivo. This chain is Mitochondrial uncoupling protein 6 (PUMP6), found in Arabidopsis thaliana (Mouse-ear cress).